Consider the following 405-residue polypeptide: Dynactin subunit 2 (405 aa).

Residues 1–24 form a disordered region; it reads MADPKYANLPGIASNEPDVYETSD. Coiled coils occupy residues 102–125 and 379–405; these read QQKY…IQTS and QQTM…KLNK.

It belongs to the dynactin subunit 2 family. Subunit of dynactin, a multiprotein complex part of a tripartite complex with dynein and a adapter, such as BICDL1, BICD2 or HOOK3. The dynactin complex is built around ACTR1A/ACTB filament and consists of an actin-related filament composed of a shoulder domain, a pointed end and a barbed end. Its length is defined by its flexible shoulder domain. The soulder is composed of 2 DCTN1 subunits, 4 DCTN2 and 2 DCTN3.

Its subcellular location is the cytoplasm. The protein resides in the cytoskeleton. It localises to the microtubule organizing center. It is found in the centrosome. The protein localises to the membrane. Functionally, part of the dynactin complex that activates the molecular motor dynein for ultra-processive transport along microtubules. In the dynactin soulder domain, binds the ACTR1A filament and acts as a molecular ruler to determine the length. Modulates cytoplasmic dynein binding to an organelle, and plays a role in prometaphase chromosome alignment and spindle organization during mitosis. Involved in anchoring microtubules to centrosomes. The chain is Dynactin subunit 2 (dctn2) from Danio rerio (Zebrafish).